A 254-amino-acid polypeptide reads, in one-letter code: Coproheme decarboxylase (254 aa).

Fe-coproporphyrin III-binding positions include Arg136, 150-154 (YPMDK), His177, Gln190, and Ser228. Tyr150 is a catalytic residue.

Belongs to the ChdC family. Type 1 subfamily. The cofactor is Fe-coproporphyrin III.

The catalysed reaction is Fe-coproporphyrin III + 2 H2O2 + 2 H(+) = heme b + 2 CO2 + 4 H2O. It carries out the reaction Fe-coproporphyrin III + H2O2 + H(+) = harderoheme III + CO2 + 2 H2O. The enzyme catalyses harderoheme III + H2O2 + H(+) = heme b + CO2 + 2 H2O. It functions in the pathway porphyrin-containing compound metabolism; protoheme biosynthesis. Involved in coproporphyrin-dependent heme b biosynthesis. Catalyzes the decarboxylation of Fe-coproporphyrin III (coproheme) to heme b (protoheme IX), the last step of the pathway. The reaction occurs in a stepwise manner with a three-propionate intermediate. This is Coproheme decarboxylase from Bacillus licheniformis (strain ATCC 14580 / DSM 13 / JCM 2505 / CCUG 7422 / NBRC 12200 / NCIMB 9375 / NCTC 10341 / NRRL NRS-1264 / Gibson 46).